Reading from the N-terminus, the 261-residue chain is Indole-3-glycerol phosphate synthase (261 aa).

This sequence belongs to the TrpC family.

It carries out the reaction 1-(2-carboxyphenylamino)-1-deoxy-D-ribulose 5-phosphate + H(+) = (1S,2R)-1-C-(indol-3-yl)glycerol 3-phosphate + CO2 + H2O. It participates in amino-acid biosynthesis; L-tryptophan biosynthesis; L-tryptophan from chorismate: step 4/5. This is Indole-3-glycerol phosphate synthase from Burkholderia vietnamiensis (strain G4 / LMG 22486) (Burkholderia cepacia (strain R1808)).